The chain runs to 416 residues: Chromate transport protein (416 aa).

Residues 1–21 form a disordered region; sequence MSVANEESYRPSKATDATTEA. The next 11 helical transmembrane spans lie at 99 to 119, 128 to 148, 160 to 177, 181 to 198, 204 to 224, 237 to 257, 283 to 303, 308 to 328, 341 to 361, 371 to 391, and 395 to 415; these read LGGV…MFAL, FVGT…IALI, LLDR…LAAI, DFWI…LLVL, ALLV…WAAP, ASVL…FGGA, LALS…VGYV, IGAV…SLIF, LHAF…ATTI, VPSL…LYAW, and LNVV…FPNQ.

Belongs to the chromate ion transporter (CHR) (TC 2.A.51) family.

The protein localises to the cell inner membrane. Its function is as follows. This protein reduces chromate accumulation and is essential for chromate resistance. In Pseudomonas aeruginosa, this protein is Chromate transport protein.